We begin with the raw amino-acid sequence, 295 residues long: Nucleotide-binding protein LSL_1171 (295 aa).

ATP is bound at residue 13-20; sequence GMSGAGKT. A GTP-binding site is contributed by 63–66; that stretch reads DLRS.

The protein belongs to the RapZ-like family.

Displays ATPase and GTPase activities. The protein is Nucleotide-binding protein LSL_1171 of Ligilactobacillus salivarius (strain UCC118) (Lactobacillus salivarius).